The chain runs to 258 residues: Synapse differentiation-inducing gene protein 1-like (258 aa).

Residues 1 to 182 lie on the Extracellular side of the membrane; sequence MESLSELQNP…FIVIPPRDHL (182 aa). Residues 183–203 form a helical membrane-spanning segment; sequence GLAIFSMLCCFWPLGIAAFYF. Over 204 to 228 the chain is Cytoplasmic; it reads SQGTSKAVTKGDFPLASIASRRALF. The helical transmembrane segment at 229-249 threads the bilayer; sequence LAALSITIGTGVYVGVVVALI. The Extracellular segment spans residues 250–258; that stretch reads AYLSKPGHI.

Belongs to the CD225/Dispanin family.

Its subcellular location is the membrane. It localises to the golgi apparatus. It is found in the cis-Golgi network. The sequence is that of Synapse differentiation-inducing gene protein 1-like (syndig1l) from Danio rerio (Zebrafish).